A 1481-amino-acid polypeptide reads, in one-letter code: ABC-type transporter braE (1481 aa).

Helical transmembrane passes span 27–47, 86–106, 130–150, 159–179, 269–289, and 308–328; these read FTVK…FILA, LILI…SSAL, IFLS…ARTY, EIAF…MLLL, LYVP…SFFC, and PANI…VIAI. One can recognise an ABC transmembrane type-1 1 domain in the interval 281 to 549; sequence LAAIGSFFCQ…LLETLPQMAA (269 aa). Asn367 is a glycosylation site (N-linked (GlcNAc...) asparagine). Helical transmembrane passes span 389 to 409, 410 to 430, and 491 to 511; these read ELWG…NLLG, VAFI…SFFM, and LMLT…PITF. Residues 594–823 enclose the ABC transporter 1 domain; that stretch reads VAIKDGSFGW…QSYIHSLGVK (230 aa). 627–634 provides a ligand contact to ATP; the sequence is GPIASGKS. N-linked (GlcNAc...) asparagine glycosylation is found at Asn671 and Asn813. A run of 6 helical transmembrane segments spans residues 887-907, 928-948, 1001-1021, 1026-1046, 1111-1131, and 1144-1164; these read IAIF…TIWL, AIYA…GVLL, SALL…AVIA, YLAI…KFYL, LHFV…SLAV, and LVTL…YTAL. Positions 887–1166 constitute an ABC transmembrane type-1 2 domain; the sequence is IAIFTSGLLY…VVIYYTALET (280 aa). N-linked (GlcNAc...) asparagine glycosylation is found at Asn1207 and Asn1232. One can recognise an ABC transporter 2 domain in the interval 1224-1477; it reads LTTNELSSND…PGTRFGELWS (254 aa). 1260–1267 contributes to the ATP binding site; the sequence is GRTGSGKS. N-linked (GlcNAc...) asparagine glycosylation is found at Asn1330 and Asn1364.

Belongs to the ABC transporter superfamily. ABCC family. Conjugate transporter (TC 3.A.1.208) subfamily.

It is found in the membrane. ABC-type transporter; part of the gene cluster that mediates the biosynthesis of the brasilane terpene glycosides brasilane D and E. The sequence is that of ABC-type transporter braE from Annulohypoxylon truncatum (Hypoxylon truncatum).